Consider the following 283-residue polypeptide: MTSVPPELIPVVVVGALGRMGAEVIKAVHLASDCELVGAVDTTPGKEGVEIGEELGIGVLDVALTSDIEACLCSVSQSFHRTGPGQGAVLVDFTHPSVVYEHTRAAFAYGVHPVIGTTGLSHQQLVDLSEFAAKASMGGAVIPNFSVGMVLLQQAAAAAARFYDNAELTELHHNRKADAPSGTCIKTAEMMEELGKSFNSPEVDEHESLTGSRGGLRASGLRLHSLRLPGLVAHQEVMFGAPGESYTLRHDTIDRSAYMPGVLLTVRKVRQLQGLVYGLERLI.

NAD(+) contacts are provided by residues 15-20 and 116-118; these read GALGRM and GTT. His172 acts as the Proton donor/acceptor in catalysis. Residue His173 coordinates (S)-2,3,4,5-tetrahydrodipicolinate. The active-site Proton donor is Lys176. 182–183 provides a ligand contact to (S)-2,3,4,5-tetrahydrodipicolinate; it reads GT.

This sequence belongs to the DapB family.

It is found in the cytoplasm. The catalysed reaction is (S)-2,3,4,5-tetrahydrodipicolinate + NAD(+) + H2O = (2S,4S)-4-hydroxy-2,3,4,5-tetrahydrodipicolinate + NADH + H(+). It carries out the reaction (S)-2,3,4,5-tetrahydrodipicolinate + NADP(+) + H2O = (2S,4S)-4-hydroxy-2,3,4,5-tetrahydrodipicolinate + NADPH + H(+). It participates in amino-acid biosynthesis; L-lysine biosynthesis via DAP pathway; (S)-tetrahydrodipicolinate from L-aspartate: step 4/4. Catalyzes the conversion of 4-hydroxy-tetrahydrodipicolinate (HTPA) to tetrahydrodipicolinate. This chain is 4-hydroxy-tetrahydrodipicolinate reductase, found in Prochlorococcus marinus (strain MIT 9313).